A 206-amino-acid chain; its full sequence is Large ribosomal subunit protein uL4 (206 aa).

The interval Gly-46–Thr-77 is disordered.

This sequence belongs to the universal ribosomal protein uL4 family. As to quaternary structure, part of the 50S ribosomal subunit.

Its function is as follows. One of the primary rRNA binding proteins, this protein initially binds near the 5'-end of the 23S rRNA. It is important during the early stages of 50S assembly. It makes multiple contacts with different domains of the 23S rRNA in the assembled 50S subunit and ribosome. In terms of biological role, forms part of the polypeptide exit tunnel. The chain is Large ribosomal subunit protein uL4 from Paracidovorax citrulli (strain AAC00-1) (Acidovorax citrulli).